The chain runs to 732 residues: Catalase-peroxidase (732 aa).

Residues 1-26 (MADNKKSPETGGITMQIPGKGRTNRD) are disordered. A cross-link (tryptophyl-tyrosyl-methioninium (Trp-Tyr) (with M-245)) is located at residues 96–219 (WHSAGTYRTF…LAAVQMGLIY (124 aa)). His-97 functions as the Proton acceptor in the catalytic mechanism. The segment at residues 219–245 (YVNPEGPDGNPDPVAAARDIREVFARM) is a cross-link (tryptophyl-tyrosyl-methioninium (Tyr-Met) (with W-96)). His-260 is a heme b binding site. The interval 344–365 (KPKGEAGAGTVPDPHDPKKRHA) is disordered.

This sequence belongs to the peroxidase family. Peroxidase/catalase subfamily. In terms of assembly, homodimer or homotetramer. It depends on heme b as a cofactor. In terms of processing, formation of the three residue Trp-Tyr-Met cross-link is important for the catalase, but not the peroxidase activity of the enzyme.

It catalyses the reaction H2O2 + AH2 = A + 2 H2O. It carries out the reaction 2 H2O2 = O2 + 2 H2O. Its function is as follows. Bifunctional enzyme with both catalase and broad-spectrum peroxidase activity. The chain is Catalase-peroxidase from Methanospirillum hungatei JF-1 (strain ATCC 27890 / DSM 864 / NBRC 100397 / JF-1).